Consider the following 324-residue polypeptide: Acetyl-coenzyme A carboxylase carboxyl transferase subunit alpha (324 aa).

One can recognise a CoA carboxyltransferase C-terminal domain in the interval 44–298 (RFQDKLTKLQ…RKELIKQLNI (255 aa)).

The protein belongs to the AccA family. Acetyl-CoA carboxylase is a heterohexamer composed of biotin carboxyl carrier protein (accB), biotin carboxylase (accC) and two subunits each of ACCase subunit alpha (accA) and ACCase subunit beta (accD).

Its subcellular location is the plastid. The protein resides in the chloroplast. The enzyme catalyses N(6)-carboxybiotinyl-L-lysyl-[protein] + acetyl-CoA = N(6)-biotinyl-L-lysyl-[protein] + malonyl-CoA. Its pathway is lipid metabolism; malonyl-CoA biosynthesis; malonyl-CoA from acetyl-CoA: step 1/1. In terms of biological role, component of the acetyl coenzyme A carboxylase (ACC) complex. First, biotin carboxylase catalyzes the carboxylation of biotin on its carrier protein (BCCP) and then the CO(2) group is transferred by the carboxyltransferase to acetyl-CoA to form malonyl-CoA. In Porphyra purpurea (Red seaweed), this protein is Acetyl-coenzyme A carboxylase carboxyl transferase subunit alpha.